The chain runs to 657 residues: Translation factor GUF1, mitochondrial (657 aa).

A mitochondrion-targeting transit peptide spans 1 to 39 (MRGCLQSVKWLTSALRPSQSLASSTRYPRRLLSTSAPRN). In terms of domain architecture, tr-type G spans 59-239 (ERFRNFCIVA…TVIEQIPAPV (181 aa)). GTP contacts are provided by residues 121-128 (HQGEDYLL), 185-189 (INKVD), and 239-242 (VGDR).

Belongs to the TRAFAC class translation factor GTPase superfamily. Classic translation factor GTPase family. LepA subfamily.

The protein localises to the mitochondrion inner membrane. The catalysed reaction is GTP + H2O = GDP + phosphate + H(+). In terms of biological role, promotes mitochondrial protein synthesis. May act as a fidelity factor of the translation reaction, by catalyzing a one-codon backward translocation of tRNAs on improperly translocated ribosomes. Binds to mitochondrial ribosomes in a GTP-dependent manner. In Ajellomyces capsulatus (strain H143) (Darling's disease fungus), this protein is Translation factor GUF1, mitochondrial.